The chain runs to 254 residues: Phosphate import ATP-binding protein PstB 2 (254 aa).

Positions phenylalanine 9–valine 249 constitute an ABC transporter domain. Position 41–48 (glycine 41–serine 48) interacts with ATP.

Belongs to the ABC transporter superfamily. Phosphate importer (TC 3.A.1.7) family. In terms of assembly, the complex is composed of two ATP-binding proteins (PstB), two transmembrane proteins (PstC and PstA) and a solute-binding protein (PstS).

The protein resides in the cell inner membrane. The enzyme catalyses phosphate(out) + ATP + H2O = ADP + 2 phosphate(in) + H(+). In terms of biological role, part of the ABC transporter complex PstSACB involved in phosphate import. Responsible for energy coupling to the transport system. In Photobacterium profundum (strain SS9), this protein is Phosphate import ATP-binding protein PstB 2.